The following is a 206-amino-acid chain: LexA repressor (206 aa).

The H-T-H motif DNA-binding region spans 28–48 (RAEIATRLGFKSANAAEEHLK). Catalysis depends on for autocatalytic cleavage activity residues Ser123 and Lys160.

The protein belongs to the peptidase S24 family. As to quaternary structure, homodimer.

It carries out the reaction Hydrolysis of Ala-|-Gly bond in repressor LexA.. Represses a number of genes involved in the response to DNA damage (SOS response), including recA and lexA. In the presence of single-stranded DNA, RecA interacts with LexA causing an autocatalytic cleavage which disrupts the DNA-binding part of LexA, leading to derepression of the SOS regulon and eventually DNA repair. In Shewanella sp. (strain ANA-3), this protein is LexA repressor.